A 428-amino-acid polypeptide reads, in one-letter code: Probable RNase MJ4 (428 aa).

Zn(2+) contacts are provided by His57, His59, Asp61, His62, His143, Asp165, and His397.

Belongs to the metallo-beta-lactamase superfamily. RNA-metabolizing metallo-beta-lactamase-like family. Zn(2+) serves as cofactor.

Functionally, probably an RNase. The sequence is that of Probable RNase MJ4 from Methanocaldococcus jannaschii (strain ATCC 43067 / DSM 2661 / JAL-1 / JCM 10045 / NBRC 100440) (Methanococcus jannaschii).